Reading from the N-terminus, the 93-residue chain is Small ribosomal subunit protein uS19 (93 aa).

Belongs to the universal ribosomal protein uS19 family.

Its function is as follows. Protein S19 forms a complex with S13 that binds strongly to the 16S ribosomal RNA. The sequence is that of Small ribosomal subunit protein uS19 from Mycobacterium tuberculosis (strain ATCC 25177 / H37Ra).